A 44-amino-acid polypeptide reads, in one-letter code: Cuticle protein CP463 (44 aa).

2 consecutive repeat copies span residues 3 to 20 and 27 to 44.

Calcified shell.

This chain is Cuticle protein CP463, found in Cancer pagurus (Rock crab).